We begin with the raw amino-acid sequence, 318 residues long: Guanidinopropionase (318 aa).

6 residues coordinate Mn(2+): His126, Asp148, His150, Asp152, Asp240, and Asp242.

It belongs to the arginase family. Agmatinase subfamily. As to quaternary structure, homohexamer. Mn(2+) serves as cofactor.

The catalysed reaction is 3-guanidinopropanoate + H2O = urea + beta-alanine. Functionally, catalyzes the hydrolysis of 3-guanidinopropanoate to beta-alanine and urea. Possesses low activity against 4-guanidinobutanoate. Has no activity against arginine and agmatine. The chain is Guanidinopropionase (gpuA) from Pseudomonas aeruginosa (strain ATCC 15692 / DSM 22644 / CIP 104116 / JCM 14847 / LMG 12228 / 1C / PRS 101 / PAO1).